We begin with the raw amino-acid sequence, 177 residues long: Large ribosomal subunit protein bL19 (177 aa).

Belongs to the bacterial ribosomal protein bL19 family.

Functionally, this protein is located at the 30S-50S ribosomal subunit interface and may play a role in the structure and function of the aminoacyl-tRNA binding site. The polypeptide is Large ribosomal subunit protein bL19 (Rhizobium meliloti (strain 1021) (Ensifer meliloti)).